The primary structure comprises 314 residues: Olfactory receptor 11H7 (314 aa).

Over 1–24 (MNNSQISTVTQFVLLGFPGPWKIQ) the chain is Extracellular. N2 carries an N-linked (GlcNAc...) asparagine glycan. Residues 25–45 (IIFFSMILLVYIFTLTGNMAI) form a helical membrane-spanning segment. Residues 46-57 (ICAVRWDHRLHT) lie on the Cytoplasmic side of the membrane. A helical transmembrane segment spans residues 58–78 (PMYVLLANFSFLEIWYVTCTV). Over 79–97 (PNMLVNFFSKTKTISFSGC) the chain is Extracellular. C97 and C179 are disulfide-bonded. Residues 98-118 (FTQFHFFFSLGTTECFFLCVM) traverse the membrane as a helical segment. At 119 to 142 (AYDRYLAICHPLHYPSIMTGQLCG) the chain is on the cytoplasmic side. A helical membrane pass occupies residues 143 to 163 (ILVSLCWLIGFLGHSISIFFI). The Extracellular segment spans residues 164-201 (FQLPFCGPNIIDHFLCDVDPLMALSSAPTHIIGHVFHS). The helical transmembrane segment at 202 to 222 (VSSLFINLTMVYILGSYTLVL) threads the bilayer. Topologically, residues 223 to 244 (RTVLQVPSSAGWQKAISTCGSH) are cytoplasmic. A helical transmembrane segment spans residues 245–265 (LVVVSLFYGAIMLMYVSPTPG). The Extracellular portion of the chain corresponds to 266-271 (NSVAMH). The chain crosses the membrane as a helical span at residues 272 to 292 (KLITLIYSVVTPVLNPLIYSL). Residues 293–314 (RNKDMKYALHHVFCGMRIIQRS) are Cytoplasmic-facing.

The protein belongs to the G-protein coupled receptor 1 family.

The protein localises to the cell membrane. Functionally, odorant receptor. Activated by isovaleric acid. This chain is Olfactory receptor 11H7 (OR11H7), found in Homo sapiens (Human).